The chain runs to 107 residues: UPF0060 membrane protein M446_5886 (107 aa).

4 helical membrane-spanning segments follow: residues 4–24 (LLAY…IWAW), 31–51 (PLWL…LTRV), 59–79 (AYAA…WAAE), and 85–105 (RWDL…LLGP).

The protein belongs to the UPF0060 family.

It is found in the cell inner membrane. This chain is UPF0060 membrane protein M446_5886, found in Methylobacterium sp. (strain 4-46).